We begin with the raw amino-acid sequence, 226 residues long: Pathogenesis-related protein R major form (226 aa).

An N-terminal signal peptide occupies residues Met-1–Ala-25. Disulfide bonds link Cys-34–Cys-225, Cys-75–Cys-85, Cys-90–Cys-96, Cys-140–Cys-214, Cys-145–Cys-197, Cys-153–Cys-163, Cys-167–Cys-176, and Cys-177–Cys-184.

The protein belongs to the thaumatin family.

It is found in the vacuole. The chain is Pathogenesis-related protein R major form from Nicotiana tabacum (Common tobacco).